A 78-amino-acid chain; its full sequence is Defensin-like protein 74 (78 aa).

Positions 1–28 (MNYKIGIMSLLVITSIIFLFLVPDKVEA) are cleaved as a signal peptide. Disulfide bonds link Cys-32-Cys-73, Cys-36-Cys-58, Cys-42-Cys-71, and Cys-46-Cys-72.

The protein belongs to the DEFL family.

It is found in the secreted. The chain is Defensin-like protein 74 (LCR43) from Arabidopsis thaliana (Mouse-ear cress).